Here is a 174-residue protein sequence, read N- to C-terminus: Ferredoxin-2, mitochondrial (174 aa).

The N-terminal 43 residues, 1–43, are a transit peptide targeting the mitochondrion; it reads MAASMARGVSARVLLRAAGGSWGPRAGHAAVTSRTFGTTGERR. A disordered region spans residues 26-52; the sequence is AGHAAVTSRTFGTTGERRAGEEAADSP. The region spanning 59 to 161 is the 2Fe-2S ferredoxin-type domain; sequence VNVVFVDRSG…GVEFALPKIT (103 aa). [2Fe-2S] cluster-binding residues include cysteine 96, cysteine 102, cysteine 105, and cysteine 142.

Belongs to the adrenodoxin/putidaredoxin family. In terms of assembly, component of the mitochondrial core iron-sulfur cluster (ISC) complex composed of NFS1, LYRM4, NDUFAB1, ISCU, FXN, and FDX2; this complex is a heterohexamer containing two copies of each monomer. Form a heterodimer complex with NFS1. Interacts (in both their reduced and oxidized states) with the cysteine desulfurase (NFS1:LYRM4) complex; this interaction stimulates cysteine desulfurase activity, and serves as a reductant for Fe-S cluster assembly. [2Fe-2S] cluster serves as cofactor.

The protein localises to the mitochondrion. Its subcellular location is the mitochondrion matrix. Its function is as follows. Electron donor, of the core iron-sulfur cluster (ISC) assembly complex, that acts to reduce the persulfide into sulfide during [2Fe-2S] clusters assembly on the scaffolding protein ISCU. The core iron-sulfur cluster (ISC) assembly complex is involved in the de novo synthesis of a [2Fe-2S] cluster, the first step of the mitochondrial iron-sulfur protein biogenesis. This process is initiated by the cysteine desulfurase complex (NFS1:LYRM4:NDUFAB1) that produces persulfide which is delivered on the scaffold protein ISCU in a FXN-dependent manner. Then this complex is stabilized by FDX2 which provides reducing equivalents to accomplish the [2Fe-2S] cluster assembly. Finally, the [2Fe-2S] cluster is transferred from ISCU to chaperone proteins, including HSCB, HSPA9 and GLRX5. Essential for coenzyme Q biosynthesis: together with FDXR, transfers the electrons required for the hydroxylation reaction performed by COQ6. The chain is Ferredoxin-2, mitochondrial from Mus musculus (Mouse).